A 590-amino-acid chain; its full sequence is Aspartate--tRNA(Asp/Asn) ligase (590 aa).

E175 contacts L-aspartate. An aspartate region spans residues 199–202; sequence QQYK. L-aspartate is bound by residues R221 and H450. 221 to 223 is a binding site for ATP; it reads RDE. Position 484 (E484) interacts with ATP. R491 lines the L-aspartate pocket. 536–539 provides a ligand contact to ATP; it reads GVDR.

The protein belongs to the class-II aminoacyl-tRNA synthetase family. Type 1 subfamily. As to quaternary structure, homodimer.

Its subcellular location is the cytoplasm. It catalyses the reaction tRNA(Asx) + L-aspartate + ATP = L-aspartyl-tRNA(Asx) + AMP + diphosphate. Aspartyl-tRNA synthetase with relaxed tRNA specificity since it is able to aspartylate not only its cognate tRNA(Asp) but also tRNA(Asn). Reaction proceeds in two steps: L-aspartate is first activated by ATP to form Asp-AMP and then transferred to the acceptor end of tRNA(Asp/Asn). In Bradyrhizobium sp. (strain BTAi1 / ATCC BAA-1182), this protein is Aspartate--tRNA(Asp/Asn) ligase.